The chain runs to 661 residues: Probable urea active transporter 3 (661 aa).

15 helical membrane passes run 13 to 33, 56 to 76, 86 to 106, 132 to 152, 165 to 185, 197 to 217, 251 to 271, 288 to 308, 352 to 372, 397 to 417, 419 to 439, 454 to 474, 495 to 515, 556 to 576, and 591 to 611; these read GIVI…TYVL, GLIS…LTSA, GSMW…VIAL, AVFL…LLLG, VVAA…SGGL, VIVY…SVHI, AVFV…CDPS, YFAG…AAAL, AGVL…LVAF, VTHV…VLFN, IGIT…PAVF, GMII…VGSC, VGNF…SYFF, IGIF…PLPM, and WIIV…FYPL.

Belongs to the sodium:solute symporter (SSF) (TC 2.A.21) family.

The protein resides in the membrane. Its subcellular location is the golgi apparatus membrane. In terms of biological role, involved in active transport of urea. This chain is Probable urea active transporter 3 (dur3-3), found in Schizosaccharomyces pombe (strain 972 / ATCC 24843) (Fission yeast).